Consider the following 120-residue polypeptide: Large ribosomal subunit protein uL22 (120 aa).

The protein belongs to the universal ribosomal protein uL22 family. Part of the 50S ribosomal subunit.

Functionally, this protein binds specifically to 23S rRNA; its binding is stimulated by other ribosomal proteins, e.g. L4, L17, and L20. It is important during the early stages of 50S assembly. It makes multiple contacts with different domains of the 23S rRNA in the assembled 50S subunit and ribosome. The globular domain of the protein is located near the polypeptide exit tunnel on the outside of the subunit, while an extended beta-hairpin is found that lines the wall of the exit tunnel in the center of the 70S ribosome. The chain is Large ribosomal subunit protein uL22 from Borreliella afzelii (strain PKo) (Borrelia afzelii).